Consider the following 768-residue polypeptide: Solabiose phosphorylase (768 aa).

Asp-456 functions as the Proton donor in the catalytic mechanism.

Belongs to the glycosyl hydrolase 94 family.

The enzyme catalyses solabiose + phosphate = D-galactose + alpha-D-glucose 1-phosphate. Functionally, catalyzes the reversible phosphorolysis of solabiose. Catalyzes the phosphorolysis and synthesis of solabiose through a sequential bi-bi mechanism involving the formation of a ternary complex. Is probably involved in the metabolism of solabiose released from solabiose-containing compounds. The polypeptide is Solabiose phosphorylase (Paenibacillus borealis).